A 338-amino-acid polypeptide reads, in one-letter code: Ketol-acid reductoisomerase (NADP(+)) (338 aa).

The KARI N-terminal Rossmann domain maps to 1–181 (MQIFYDKDCD…GGGRTGIIET (181 aa)). NADP(+) is bound by residues 24 to 27 (YGSQ), arginine 47, serine 50, serine 52, and 82 to 85 (DEFQ). Histidine 107 is a catalytic residue. Glycine 133 serves as a coordination point for NADP(+). In terms of domain architecture, KARI C-terminal knotted spans 182–327 (SFREETETDL…AKLRAMMPWI (146 aa)). Residues aspartate 190, glutamate 194, glutamate 226, and glutamate 230 each coordinate Mg(2+). Residue serine 251 participates in substrate binding.

The protein belongs to the ketol-acid reductoisomerase family. It depends on Mg(2+) as a cofactor.

It carries out the reaction (2R)-2,3-dihydroxy-3-methylbutanoate + NADP(+) = (2S)-2-acetolactate + NADPH + H(+). The catalysed reaction is (2R,3R)-2,3-dihydroxy-3-methylpentanoate + NADP(+) = (S)-2-ethyl-2-hydroxy-3-oxobutanoate + NADPH + H(+). It participates in amino-acid biosynthesis; L-isoleucine biosynthesis; L-isoleucine from 2-oxobutanoate: step 2/4. It functions in the pathway amino-acid biosynthesis; L-valine biosynthesis; L-valine from pyruvate: step 2/4. Functionally, involved in the biosynthesis of branched-chain amino acids (BCAA). Catalyzes an alkyl-migration followed by a ketol-acid reduction of (S)-2-acetolactate (S2AL) to yield (R)-2,3-dihydroxy-isovalerate. In the isomerase reaction, S2AL is rearranged via a Mg-dependent methyl migration to produce 3-hydroxy-3-methyl-2-ketobutyrate (HMKB). In the reductase reaction, this 2-ketoacid undergoes a metal-dependent reduction by NADPH to yield (R)-2,3-dihydroxy-isovalerate. This chain is Ketol-acid reductoisomerase (NADP(+)), found in Acinetobacter baumannii (strain AB0057).